A 319-amino-acid polypeptide reads, in one-letter code: tRNA uridine(34) hydroxylase (319 aa).

Positions 127–221 constitute a Rhodanese domain; that stretch reads KQEDTVIIDA…YGKDPEVQGE (95 aa). Residue Cys181 is the Cysteine persulfide intermediate of the active site.

Belongs to the TrhO family.

It carries out the reaction uridine(34) in tRNA + AH2 + O2 = 5-hydroxyuridine(34) in tRNA + A + H2O. In terms of biological role, catalyzes oxygen-dependent 5-hydroxyuridine (ho5U) modification at position 34 in tRNAs. The polypeptide is tRNA uridine(34) hydroxylase (Bacillus thuringiensis (strain Al Hakam)).